A 152-amino-acid polypeptide reads, in one-letter code: Sec-independent protein translocase protein TatB (152 aa).

Residues 1–21 (MFDLGWSELLVIGVVALIVVG) form a helical membrane-spanning segment.

The protein belongs to the TatB family. In terms of assembly, the Tat system comprises two distinct complexes: a TatABC complex, containing multiple copies of TatA, TatB and TatC subunits, and a separate TatA complex, containing only TatA subunits. Substrates initially bind to the TatABC complex, which probably triggers association of the separate TatA complex to form the active translocon.

It is found in the cell inner membrane. Part of the twin-arginine translocation (Tat) system that transports large folded proteins containing a characteristic twin-arginine motif in their signal peptide across membranes. Together with TatC, TatB is part of a receptor directly interacting with Tat signal peptides. TatB may form an oligomeric binding site that transiently accommodates folded Tat precursor proteins before their translocation. In Ruegeria pomeroyi (strain ATCC 700808 / DSM 15171 / DSS-3) (Silicibacter pomeroyi), this protein is Sec-independent protein translocase protein TatB.